Here is a 117-residue protein sequence, read N- to C-terminus: Minor capsid protein p17 (117 aa).

The N-linked (GlcNAc...) asparagine; by host glycan is linked to asparagine 12. Residues 39-59 (AIILGILILLVIILIIVAIVY) form a helical membrane-spanning segment. 2 N-linked (GlcNAc...) asparagine; by host glycosylation sites follow: asparagine 61 and asparagine 97.

It belongs to the asfivirus minor capsid protein p17 family. As to quaternary structure, interacts with the minor capsid protein M1249L and with the hexon capsid protein p72 capsomers; these interactions form a rigid zipper structure that stabilizes the capsomers. Interacts with host STING1.

Its subcellular location is the virion membrane. The protein localises to the host endoplasmic reticulum membrane. In terms of biological role, together with the penton and the other minor capsid proteins (M1249L, p49), forms a complicated network immediately below the outer capsid shell, stabilizing the whole capsid. Three copies of p17 encircle each p72 capsomer in the inner capsid shell, anchoring p72 capsomers on the inner membrane. Required for the assembly of the capsid and icosahedral morphogenesis. Additionally, inhibits the host cGAS-STING pathway through its interaction with STING1 and subsequent interference of the recruitment of downstream components TBK1 and IKBKE. The sequence is that of Minor capsid protein p17 from Ornithodoros (relapsing fever ticks).